The sequence spans 311 residues: Coproporphyrin III ferrochelatase 1 (311 aa).

Fe-coproporphyrin III is bound by residues Y12, R29, 45-46 (RY), S53, and Y124. H182 and E263 together coordinate Fe(2+).

The protein belongs to the ferrochelatase family.

It localises to the cytoplasm. The enzyme catalyses Fe-coproporphyrin III + 2 H(+) = coproporphyrin III + Fe(2+). It participates in porphyrin-containing compound metabolism; protoheme biosynthesis. Involved in coproporphyrin-dependent heme b biosynthesis. Catalyzes the insertion of ferrous iron into coproporphyrin III to form Fe-coproporphyrin III. This is Coproporphyrin III ferrochelatase 1 from Bacillus cereus (strain ZK / E33L).